Here is a 325-residue protein sequence, read N- to C-terminus: Beta-ketoacyl-[acyl-carrier-protein] synthase III (325 aa).

Catalysis depends on residues cysteine 112 and histidine 250. An ACP-binding region spans residues 251–255 (QANIR). Asparagine 280 is an active-site residue.

It belongs to the thiolase-like superfamily. FabH family. As to quaternary structure, homodimer.

It is found in the cytoplasm. It carries out the reaction malonyl-[ACP] + acetyl-CoA + H(+) = 3-oxobutanoyl-[ACP] + CO2 + CoA. It functions in the pathway lipid metabolism; fatty acid biosynthesis. Functionally, catalyzes the condensation reaction of fatty acid synthesis by the addition to an acyl acceptor of two carbons from malonyl-ACP. Catalyzes the first condensation reaction which initiates fatty acid synthesis and may therefore play a role in governing the total rate of fatty acid production. Possesses both acetoacetyl-ACP synthase and acetyl transacylase activities. Its substrate specificity determines the biosynthesis of branched-chain and/or straight-chain of fatty acids. This chain is Beta-ketoacyl-[acyl-carrier-protein] synthase III, found in Clostridium acetobutylicum (strain ATCC 824 / DSM 792 / JCM 1419 / IAM 19013 / LMG 5710 / NBRC 13948 / NRRL B-527 / VKM B-1787 / 2291 / W).